A 507-amino-acid chain; its full sequence is E3 SUMO-protein ligase PIAS4 (507 aa).

Alanine 2 is modified (N-acetylalanine). A Glycyl lysine isopeptide (Lys-Gly) (interchain with G-Cter in SUMO2) cross-link involves residue lysine 9. Positions 12 to 46 constitute an SAP domain; it reads VMSFRVSDLQMLLGFVGRSKSGLKHELVTRALQLV. The LXXLL motif motif lies at 20–24; the sequence is LQMLL. Lysine 35 participates in a covalent cross-link: Glycyl lysine isopeptide (Lys-Gly) (interchain with G-Cter in SUMO); alternate. Lysine 35 is covalently cross-linked (Glycyl lysine isopeptide (Lys-Gly) (interchain with G-Cter in SUMO2); alternate). Glycyl lysine isopeptide (Lys-Gly) (interchain with G-Cter in SUMO2) cross-links involve residues lysine 56, lysine 59, lysine 68, and lysine 69. The residue at position 107 (lysine 107) is an N6-acetyllysine. Residues 112–272 form the PINIT domain; sequence LGRLPTKTLK…SVALYLVRQL (161 aa). Lysine 118 participates in a covalent cross-link: Glycyl lysine isopeptide (Lys-Gly) (interchain with G-Cter in SUMO2). A Glycyl lysine isopeptide (Lys-Gly) (interchain with G-Cter in SUMO) cross-link involves residue lysine 128. An SP-RING-type zinc finger spans residues 304 to 385; that stretch reads PDSEIATTGV…LSKILSECEG (82 aa). The Zn(2+) site is built by cysteine 335, histidine 337, cysteine 358, and cysteine 361. Residues 426 to 507 are disordered; it reads APASSTPGIG…PFQKGLVPAC (82 aa). A compositionally biased stretch (gly residues) spans 434–450; it reads IGSGLSGPGSAGSGAGA. Positions 474–489 are enriched in acidic residues; the sequence is SEDEDEDEDDDEDEDE.

Belongs to the PIAS family. In terms of assembly, interacts with AR, GATA2, LEF1, TP53 and STAT1 (IFNG-induced). Interacts with TICAM1. Interacts with MTA1. Interacts with PRDM1/Blimp-1. Interacts with TRIM32 upon treatment with UVB and TNF-alpha. As to quaternary structure, (Microbial infection) Interacts ewith Moloney murine leukemia virus Capsid protein p30. Post-translationally, sumoylated. Lys-35 is the main site of sumoylation. Sumoylation is required for TCF4 sumoylation and transcriptional activation. Represses LEF1 transcriptional activity. SUMO1 is the preferred conjugate. In terms of processing, ubiquitinated by TRIM32 upon treatment with UVB and TNF-alpha. In terms of tissue distribution, widely expressed, with highest levels in testis. Also expressed in vascular endothelial cells, in primary keratinocytes and in the CNS, including cortex, olfactory bulb, spinal cord, thalamus and trigeminal ganglion. Low expression, if any, in liver and lung.

It localises to the nucleus. It is found in the PML body. It carries out the reaction S-ubiquitinyl-[E2 ubiquitin-conjugating enzyme]-L-cysteine + [acceptor protein]-L-lysine = [E2 ubiquitin-conjugating enzyme]-L-cysteine + N(6)-ubiquitinyl-[acceptor protein]-L-lysine.. It functions in the pathway protein modification; protein sumoylation. Functionally, functions as an E3-type small ubiquitin-like modifier (SUMO) ligase, stabilizing the interaction between UBE2I and the substrate, and as a SUMO-tethering factor. Mediates sumoylation of ALKBH5, AXIN1, CEBPA, KLF8, GATA2, PARK7, HERC2, MYB, TCF4 and RNF168. Plays a crucial role as a transcriptional coregulation in various cellular pathways, including the STAT pathway, the p53/TP53 pathway, the Wnt pathway and the steroid hormone signaling pathway. Involved in gene silencing. In Wnt signaling, represses LEF1 and enhances TCF4 transcriptional activities through promoting their sumoylations. Enhances the sumoylation of MTA1 and may participate in its paralog-selective sumoylation. Binds to AT-rich DNA sequences, known as matrix or scaffold attachment regions (MARs/SARs). Catalyzes conjugation of SUMO2 to KAT5 in response to DNA damage, facilitating repair of DNA double-strand breaks (DSBs) via homologous recombination (HR). Mediates sumoylation of PARP1 in response to PARP1 trapping to chromatin. Mediates sumoylation of KLF8, repressiing KLF8 transcriptional activity and cell cycle progression into G(1) phase. Sumoylates ALKBH5 downstream of MAPK8/JNK1 and MAPK9/JNK2 in response to reactive oxygen species (ROS), inhibiting ALKBH5 RNA demethylase activity. In Mus musculus (Mouse), this protein is E3 SUMO-protein ligase PIAS4 (Pias4).